The sequence spans 189 residues: Chitin synthase 1 (189 aa).

Belongs to the chitin synthase family. Class I subfamily.

The protein resides in the cell membrane. The enzyme catalyses [(1-&gt;4)-N-acetyl-beta-D-glucosaminyl](n) + UDP-N-acetyl-alpha-D-glucosamine = [(1-&gt;4)-N-acetyl-beta-D-glucosaminyl](n+1) + UDP + H(+). Its function is as follows. Polymerizes chitin, a structural polymer of the cell wall and septum, by transferring the sugar moiety of UDP-GlcNAc to the non-reducing end of the growing chitin polymer. The protein is Chitin synthase 1 (chs1) of Aspergillus niger.